Reading from the N-terminus, the 168-residue chain is Disulfide bond formation protein B (168 aa).

Over 1 to 6 (MTSRWI) the chain is Cytoplasmic. Residues 7–23 (FGLVFLVCAGLLAVAFY) form a helical membrane-spanning segment. Topologically, residues 24 to 41 (MEHVMGLEPCPLCWLQRF) are periplasmic. A disulfide bridge links cysteine 33 with cysteine 36. A helical transmembrane segment spans residues 42–58 (GFMGAGLVSLLAFLHGP). At 59–65 (RGFGNRV) the chain is on the cytoplasmic side. A helical membrane pass occupies residues 66-82 (YGLLLIVAAGAGLAVAG). Over 83-139 (RQLWLQSLPADQVPACGPSVDYMLEVLPWFEVLQTALKGTGDCAEVVWRFLGLSIPG) the chain is Periplasmic. Cysteine 98 and cysteine 125 are oxidised to a cystine. A helical membrane pass occupies residues 140 to 158 (WTAVFFSLLIVLGLFVMLR). Over 159–168 (RYSPRDWLQS) the chain is Cytoplasmic.

It belongs to the DsbB family.

It localises to the cell inner membrane. In terms of biological role, required for disulfide bond formation in some periplasmic proteins. Acts by oxidizing the DsbA protein. In Marinobacter nauticus (strain ATCC 700491 / DSM 11845 / VT8) (Marinobacter aquaeolei), this protein is Disulfide bond formation protein B.